The chain runs to 713 residues: Denticleless protein homolog (713 aa).

WD repeat units lie at residues 47-89 (GAAV…VQRL), 96-135 (AHTNAVFDIAWVPGEHKLVTASGDQTAKLWDVKAGDLIGE), and 138-178 (GHQC…KDGF). The DDB1-binding motif signature appears at 168–171 (WDTR). The short motif at 197-204 (PSKVKKRK) is the Nuclear localization signal element. WD repeat units follow at residues 215-254 (DSQQSVTVVIFQDEHTIISAGAVDGIVKVWDLRKNYSAYR), 270-309 (TRKLGYSNLVLDPTGTNLFASCTDDNVYMFNATGLKTEPV), 314-355 (GHQN…VPPV), and 359-399 (GHCQ…EDSA). Residues 244–247 (WDLR) carry the DDB1-binding motif motif. 3 disordered regions span residues 474 to 544 (TPQR…EKRA), 604 to 623 (GFDQEFSPGPSTSFLINGTV), and 635 to 700 (SDLR…TPGS). Polar residues-rich tracts occupy residues 504–516 (TPKSSTRADTKTP) and 612–623 (GPSTSFLINGTV). Residues 635–644 (SDLRDKENSS) are compositionally biased toward basic and acidic residues. The span at 686 to 699 (NAPNSPVSVPTTPG) shows a compositional bias: polar residues.

The protein belongs to the WD repeat cdt2 family. In terms of assembly, component of the DCX(DTL) E3 ubiquitin ligase complex, at least composed of cul4 (cul4a or cul4b), ddb1, dtl/cdt2 and rbx1.

The protein resides in the nucleus. It is found in the cytoplasm. It localises to the cytoskeleton. Its subcellular location is the microtubule organizing center. The protein localises to the centrosome. The protein resides in the chromosome. It functions in the pathway protein modification; protein ubiquitination. Functionally, substrate-specific adapter of a DCX (DDB1-CUL4-X-box) E3 ubiquitin-protein ligase complex required for cell cycle control, DNA damage response and translesion DNA synthesis. The DCX(DTL) complex, also named CRL4(CDT2) complex, mediates the polyubiquitination and subsequent degradation of CDT1, CDKN1A/p21(CIP1), KMT5A and SDE2. CDT1 degradation in response to DNA damage is necessary to ensure proper cell cycle regulation of DNA replication. CDKN1A/p21(CIP1) degradation during S phase or following UV irradiation is essential to control replication licensing. KMT5A degradation is also important for a proper regulation of mechanisms such as TGF-beta signaling, cell cycle progression, DNA repair and cell migration. Most substrates require their interaction with PCNA for their polyubiquitination: substrates interact with PCNA via their PIP-box, and those containing the 'K+4' motif in the PIP box, recruit the DCX(DTL) complex, leading to their degradation. In undamaged proliferating cells, the DCX(DTL) complex also promotes the 'Lys-164' monoubiquitination of PCNA, thereby being involved in PCNA-dependent translesion DNA synthesis. May play a role in the regulation of the circadian clock. The protein is Denticleless protein homolog (dtl) of Xenopus tropicalis (Western clawed frog).